Consider the following 91-residue polypeptide: CRISPR-associated endoribonuclease Cas2 2 (91 aa).

D6 contributes to the Mg(2+) binding site.

This sequence belongs to the CRISPR-associated endoribonuclease Cas2 protein family. Homodimer, forms a heterotetramer with a Cas1 homodimer. It depends on Mg(2+) as a cofactor.

In terms of biological role, CRISPR (clustered regularly interspaced short palindromic repeat), is an adaptive immune system that provides protection against mobile genetic elements (viruses, transposable elements and conjugative plasmids). CRISPR clusters contain sequences complementary to antecedent mobile elements and target invading nucleic acids. CRISPR clusters are transcribed and processed into CRISPR RNA (crRNA). Functions as a ssRNA-specific endoribonuclease. Involved in the integration of spacer DNA into the CRISPR cassette. In Moorella thermoacetica (strain ATCC 39073 / JCM 9320), this protein is CRISPR-associated endoribonuclease Cas2 2.